The following is a 362-amino-acid chain: MKIKKIKLLKALALTGAFGIVATVPVIVSSCSSTSENNGNGNGNGGTDGNTQQTEVTPAIKSEVSLTGALSKIYDTKTGTDRETTSQLIVKDIKANPENYFTNGEALKDVIASATVTVDGGFTESTFTGEAYSVWSAKADVKKGTYSQASKQLDIKSINDLQTVLGDSAAIKGICDLIPNLKLNNGTDYKVTNNGLSLSEDLLHINVTAKDGQTDVSMDLAIPVSDLNLKIDGLKISVSGTGIKTSELTTNYKFNIGIDNTVKTLTPAAVTLAEADRTNAEKVLEKLGYATVSGSTYTLDQDKLADALGLYNCKFEAVKSEKDSTNNNKYTVTLKATPNDGYFWEDGTNGAKEDISFVATFS.

The first 30 residues, M1–S30, serve as a signal peptide directing secretion. The N-palmitoyl cysteine moiety is linked to residue C31. C31 carries S-diacylglycerol cysteine lipidation. The disordered stretch occupies residues S33 to Q53.

This sequence belongs to the p35 lipoprotein family. The N-terminus is blocked.

The protein resides in the cell membrane. Major M.penetrans antigen. The sequence is that of Lipoprotein p35 from Malacoplasma penetrans (strain HF-2) (Mycoplasma penetrans).